We begin with the raw amino-acid sequence, 90 residues long: uncharacterized protein (90 aa).

A helical transmembrane segment spans residues 46-62; the sequence is MALLVVFLVSLFACTTI.

The protein resides in the membrane. This is an uncharacterized protein from Haemophilus influenzae (strain ATCC 51907 / DSM 11121 / KW20 / Rd).